Here is a 176-residue protein sequence, read N- to C-terminus: Inner membrane-spanning protein YciB (176 aa).

6 consecutive transmembrane segments (helical) span residues 3 to 23, 24 to 44, 49 to 69, 81 to 101, 121 to 141, and 149 to 169; these read FLFD…WGIF, TATA…AFRH, TMLW…LVLH, LYWL…NNLI, VAWA…VHNF, and FKLF…SLWL.

The protein belongs to the YciB family.

The protein resides in the cell inner membrane. Its function is as follows. Plays a role in cell envelope biogenesis, maintenance of cell envelope integrity and membrane homeostasis. The chain is Inner membrane-spanning protein YciB from Burkholderia vietnamiensis (strain G4 / LMG 22486) (Burkholderia cepacia (strain R1808)).